Consider the following 409-residue polypeptide: tRNA(Met) cytidine acetate ligase (409 aa).

Residues 7-20, glycine 102, asparagine 169, and arginine 194 each bind ATP; that span reads VVEY…HLYH.

The protein belongs to the TmcAL family.

Its subcellular location is the cytoplasm. It catalyses the reaction cytidine(34) in elongator tRNA(Met) + acetate + ATP = N(4)-acetylcytidine(34) in elongator tRNA(Met) + AMP + diphosphate. Catalyzes the formation of N(4)-acetylcytidine (ac(4)C) at the wobble position of elongator tRNA(Met), using acetate and ATP as substrates. First activates an acetate ion to form acetyladenylate (Ac-AMP) and then transfers the acetyl group to tRNA to form ac(4)C34. The sequence is that of tRNA(Met) cytidine acetate ligase from Clostridium botulinum (strain Okra / Type B1).